The following is an 85-amino-acid chain: Platelet factor 4 (85 aa).

Cystine bridges form between C25-C51 and C27-C67. At S41 the chain carries Phosphoserine. 76–82 (KKIIKRL) provides a ligand contact to heparin.

The protein belongs to the intercrine alpha (chemokine CxC) family. Homotetramer. Interacts with TNFAIP6 (via Link domain). Interacts with CCR1. Interacts with CXCR3. Interacts with THBD; this interaction enhances generation of activated protein C.

The protein resides in the secreted. In terms of biological role, chemokine released during platelet aggregation that plays a role in different biological processes including hematopoiesis, cell proliferation, differentiation, and activation. Acts via different functional receptors including CCR1, CXCR3A or CXCR3B. Upon interaction with CXCR3A receptor, induces activated T-lymphocytes migration mediated via downstream Ras/extracellular signal-regulated kinase (ERK) signaling. Neutralizes the anticoagulant effect of heparin by binding more strongly to heparin than to the chondroitin-4-sulfate chains of the carrier molecule. Plays a role in the inhibition of hematopoiesis and in the maintenance of hematopoietic stem cell (HSC) quiescence. Chemotactic for neutrophils and monocytes via CCR1. Inhibits endothelial cell proliferation. In cooperation with toll-like receptor 8/TLR8, induces chromatin remodeling and activates inflammatory gene expression via the TBK1-IRF5 axis. In addition, induces myofibroblast differentiation and collagen synthesis in different precursor cells, including endothelial cells, by stimulating endothelial-to-mesenchymal transition. Interacts with thrombomodulin/THBD to enhance the activation of protein C and thus potentiates its anticoagulant activity. This is Platelet factor 4 (PF4) from Ovis aries (Sheep).